The sequence spans 170 residues: Peptide methionine sulfoxide reductase MsrA (170 aa).

The active site involves Cys13.

It belongs to the MsrA Met sulfoxide reductase family.

The catalysed reaction is L-methionyl-[protein] + [thioredoxin]-disulfide + H2O = L-methionyl-(S)-S-oxide-[protein] + [thioredoxin]-dithiol. The enzyme catalyses [thioredoxin]-disulfide + L-methionine + H2O = L-methionine (S)-S-oxide + [thioredoxin]-dithiol. Has an important function as a repair enzyme for proteins that have been inactivated by oxidation. Catalyzes the reversible oxidation-reduction of methionine sulfoxide in proteins to methionine. This Nocardia farcinica (strain IFM 10152) protein is Peptide methionine sulfoxide reductase MsrA.